We begin with the raw amino-acid sequence, 311 residues long: Probable manganese-dependent inorganic pyrophosphatase (311 aa).

Mn(2+)-binding residues include histidine 9, aspartate 13, aspartate 15, aspartate 75, histidine 97, and aspartate 149.

Belongs to the PPase class C family. It depends on Mn(2+) as a cofactor.

It is found in the cytoplasm. The enzyme catalyses diphosphate + H2O = 2 phosphate + H(+). The polypeptide is Probable manganese-dependent inorganic pyrophosphatase (Lactobacillus gasseri (strain ATCC 33323 / DSM 20243 / BCRC 14619 / CIP 102991 / JCM 1131 / KCTC 3163 / NCIMB 11718 / NCTC 13722 / AM63)).